The primary structure comprises 510 residues: Protein ERGIC-53 (510 aa).

The first 30 residues, 1 to 30 (MAGSRQRGLRARVRPLFCALLLSLGRFVRG), serve as a signal peptide directing secretion. The Lumenal segment spans residues 31–477 (DGVGGDPAVA…ELPPFPSCLS (447 aa)). One can recognise an L-type lectin-like domain in the interval 44–267 (RRFEYKYSFK…DVLSFLTFQL (224 aa)). A carbohydrate contacts are provided by Ser88 and Asp121. Ca(2+) is bound by residues Asp152, Phe154, and Asn156. Asn156 and His178 together coordinate a carbohydrate. Asp181 lines the Ca(2+) pocket. A disulfide bridge connects residues Cys190 and Cys230. Residue 251–253 (GGL) coordinates a carbohydrate. A Phosphoserine modification is found at Ser425. A helical transmembrane segment spans residues 478 to 498 (TVHFIIFVVVQTVLFIGYIMY). Over 499–510 (RSQQEAAAKKFF) the chain is Cytoplasmic. The segment at 499–510 (RSQQEAAAKKFF) is mediates interaction with RAB3GAP1, RAB3GAP2 and UBXN6. The short motif at 509–510 (FF) is the ER export motif element.

In terms of assembly, exists both as a covalent disulfide-linked homohexamer, and a complex of three disulfide-linked dimers non-covalently kept together. Interacts with MCFD2. May interact with TMEM115. Interacts with RAB3GAP1 and RAB3GAP2. Interacts with UBXN6. Interacts with SERPINA1/alpha1-antitrypsin. Interacts with BET1. Post-translationally, the N-terminal may be partly blocked. As to expression, ubiquitous.

Its subcellular location is the endoplasmic reticulum-Golgi intermediate compartment membrane. It localises to the golgi apparatus membrane. It is found in the endoplasmic reticulum membrane. Its function is as follows. Mannose-specific lectin. May recognize sugar residues of glycoproteins, glycolipids, or glycosylphosphatidyl inositol anchors and may be involved in the sorting or recycling of proteins, lipids, or both. The LMAN1-MCFD2 complex forms a specific cargo receptor for the ER-to-Golgi transport of selected proteins. The protein is Protein ERGIC-53 (LMAN1) of Homo sapiens (Human).